The following is a 214-amino-acid chain: Small ribosomal subunit protein uS5 (214 aa).

The S5 DRBM domain maps to 55–118; that stretch reads LKYERLDVGI…RNAKLNITPV (64 aa).

Belongs to the universal ribosomal protein uS5 family. Part of the 30S ribosomal subunit. Contacts protein S4.

With S4 and S12 plays an important role in translational accuracy. The sequence is that of Small ribosomal subunit protein uS5 from Staphylothermus marinus (strain ATCC 43588 / DSM 3639 / JCM 9404 / F1).